Reading from the N-terminus, the 770-residue chain is Tripartite terminase subunit 1 (770 aa).

The C3H1-type zinc-finger motif lies at 199-227 (CAICFEELCITANQGETLHRRLLGCICDH). 675–682 (FTSVFHCG) is a binding site for ATP.

Belongs to the herpesviridae TRM1 protein family. Associates with TRM2 and TRM3 to form the tripartite terminase complex. Interacts with portal protein.

The protein resides in the host nucleus. In terms of biological role, component of the molecular motor that translocates viral genomic DNA in empty capsid during DNA packaging. Forms a tripartite terminase complex together with TRM2 and TRM3 in the host cytoplasm. Once the complex reaches the host nucleus, it interacts with the capsid portal vertex. This portal forms a ring in which genomic DNA is translocated into the capsid. TRM1 carries an endonuclease activity that plays an important role for the cleavage of concatemeric viral DNA into unit length genomes. The protein is Tripartite terminase subunit 1 of Varicella-zoster virus (strain Dumas) (HHV-3).